Reading from the N-terminus, the 320-residue chain is Protein phosphatase PTC7 homolog fig (320 aa).

The region spanning 49-315 (PYLVTAVQGR…DDITLILASV (267 aa)) is the PPM-type phosphatase domain. Mn(2+) contacts are provided by aspartate 93, glycine 94, and aspartate 238.

It belongs to the PP2C family. Mg(2+) serves as cofactor. It depends on Mn(2+) as a cofactor.

The enzyme catalyses O-phospho-L-seryl-[protein] + H2O = L-seryl-[protein] + phosphate. The catalysed reaction is O-phospho-L-threonyl-[protein] + H2O = L-threonyl-[protein] + phosphate. The protein is Protein phosphatase PTC7 homolog fig of Drosophila yakuba (Fruit fly).